The following is a 107-amino-acid chain: ESAT-6-like protein EsxD (107 aa).

This sequence belongs to the WXG100 family. CFP-10 subfamily.

The protein localises to the secreted. In Mycobacterium tuberculosis (strain ATCC 25618 / H37Rv), this protein is ESAT-6-like protein EsxD.